The sequence spans 257 residues: Probable septum site-determining protein MinC (257 aa).

The protein belongs to the MinC family. In terms of assembly, interacts with MinD and FtsZ.

Cell division inhibitor that blocks the formation of polar Z ring septums. Rapidly oscillates between the poles of the cell to destabilize FtsZ filaments that have formed before they mature into polar Z rings. Prevents FtsZ polymerization. This Burkholderia lata (strain ATCC 17760 / DSM 23089 / LMG 22485 / NCIMB 9086 / R18194 / 383) protein is Probable septum site-determining protein MinC.